Here is a 284-residue protein sequence, read N- to C-terminus: Phosphoribosylaminoimidazole-succinocarboxamide synthase (284 aa).

Belongs to the SAICAR synthetase family.

It catalyses the reaction 5-amino-1-(5-phospho-D-ribosyl)imidazole-4-carboxylate + L-aspartate + ATP = (2S)-2-[5-amino-1-(5-phospho-beta-D-ribosyl)imidazole-4-carboxamido]succinate + ADP + phosphate + 2 H(+). The protein operates within purine metabolism; IMP biosynthesis via de novo pathway; 5-amino-1-(5-phospho-D-ribosyl)imidazole-4-carboxamide from 5-amino-1-(5-phospho-D-ribosyl)imidazole-4-carboxylate: step 1/2. In Chromobacterium violaceum (strain ATCC 12472 / DSM 30191 / JCM 1249 / CCUG 213 / NBRC 12614 / NCIMB 9131 / NCTC 9757 / MK), this protein is Phosphoribosylaminoimidazole-succinocarboxamide synthase.